We begin with the raw amino-acid sequence, 217 residues long: Somatotropin (217 aa).

The N-terminal stretch at methionine 1–alanine 27 is a signal peptide. Histidine 46 contacts Zn(2+). A disulfide bond links cysteine 79 and cysteine 190. A Phosphoserine modification is found at serine 132. Glutamate 199 lines the Zn(2+) pocket. Cysteine 207 and cysteine 215 are oxidised to a cystine.

Belongs to the somatotropin/prolactin family.

It is found in the secreted. Functionally, plays an important role in growth control. Its major role in stimulating body growth is to stimulate the liver and other tissues to secrete IGF1. It stimulates both the differentiation and proliferation of myoblasts. It also stimulates amino acid uptake and protein synthesis in muscle and other tissues. The polypeptide is Somatotropin (GH1) (Cervus elaphus (Red deer)).